The primary structure comprises 112 residues: Nitrogen regulatory protein P-II (112 aa).

Y51 bears the O-UMP-tyrosine mark.

Belongs to the P(II) protein family. As to quaternary structure, homotrimer.

In nitrogen-limiting conditions, when the ratio of Gln to 2-ketoglutarate decreases, P-II is uridylylated to P-II-UMP. P-II-UMP allows the deadenylation of glutamine synthetase (GS), thus activating the enzyme. Conversely, in nitrogen excess P-II is deuridylated and promotes the adenylation of GS. P-II indirectly controls the transcription of the GS gene (glnA). P-II prevents NR-II-catalyzed conversion of NR-I to NR-I-phosphate, the transcriptional activator of glnA. When P-II is uridylylated to P-II-UMP, these events are reversed. This chain is Nitrogen regulatory protein P-II (glnB), found in Bradyrhizobium diazoefficiens (strain JCM 10833 / BCRC 13528 / IAM 13628 / NBRC 14792 / USDA 110).